Consider the following 102-residue polypeptide: Legumin-like protein Mac i 2 (102 aa).

It belongs to the 11S seed storage protein (globulins) family.

Functionally, seed storage protein. This is Legumin-like protein Mac i 2 from Macadamia integrifolia (Macadamia nut).